The following is a 5890-amino-acid chain: MEKEETTRELLLPNWQGSGSHGLTIAQRDDGVFVQEVTQNSPAARTGVVKEGDQIVGATIYFDNLQSGEVTQLLNTMGHHTVGLKLHRKGDRSPEPGQTWTREVFSSCSSEVVLSGDDEEYQRIYTTKIKPRLKSEDGVEGDLGETQSRTITVTRRVTAYTVDVTGREGAKDIDISSPEFKIKIPRHELTEISNVDVETQSGKTVIRLPSGSGAASPTGSAVDIRAGAISASGPELQGAGHSKLQVTMPGIKVGGSGVNVNAKGLDLGGRGGVQVPAVDISSSLGGRAVEVQGPSLESGDHGKIKFPTMKVPKFGVSTGREGQTPKAGLRVSAPEVSVGHKGGKPGLTIQAPQLEVSVPSANIEGLEGKLKGPQITGPSLEGDLGLKGAKPQGHIGVDASAPQIGGSITGPSVEVQAPDIDVQGPGSKLNVPKMKVPKFSVSGAKGEETGIDVTLPTGEVTVPGVSGDVSLPEIATGGLEGKMKGTKVKTPEMIIQKPKISMQDVDLSLGSPKLKGDIKVSAPGVQGDVKGPQVALKGSRVDIETPNLEGTLTGPRLGSPSGKTGTCRISMSEVDLNVAAPKVKGGVDVTLPRVEGKVKVPEVDVRGPKVDVSAPDVEAHGPEWNLKMPKMKMPTFSTPGAKGEGPDVHMTLPKGDISISGPKVNVEAPDVNLEGLGGKLKGPDVKLPDMSVKTPKISMPDVDLHVKGTKVKGEYDVTVPKLEGELKGPKVDIDAPDVDVHGPDWHLKMPKMKMPKFSVPGFKAEGPEVDVNLPKADVDISGPKIDVTAPDVSIEEPEGKLKGPKFKMPEMNIKVPKISMPDVDLHLKGPNVKGEYDVTMPKVESEIKVPDVELKSAKMDIDVPDVEVQGPDWHLKMPKMKMPKFSMPGFKAEGPEVDVNLPKADVDISGPKVGVEVPDVNIEGPEGKLKGPKFKMPEMNIKAPKISMPDVDLHMKGPKVKGEYDMTVPKLEGDLKGPKVDVSAPDVEMQGPDWNLKMPKIKMPKFSMPSLKGEGPEFDVNLSKANVDISAPKVDTNAPDLSLEGPEGKLKGPKFKMPEMHFRAPKMSLPDVDLDLKGPKMKGNVDISAPKIEGEMQVPDVDIRGPKVDIKAPDVEGQGLDWSLKIPKMKMPKFSMPSLKGEGPEVDVNLPKADVVVSGPKVDIEAPDVSLEGPEGKLKGPKFKMPEMHFKTPKISMPDVDLHLKGPKVKGDVDVSVPKVEGEMKVPDVEIKGPKMDIDAPDVEVQGPDWHLKMPKMKMPKFSMPGFKGEGREVDVNLPKADIDVSGPKVDVEVPDVSLEGPEGKLKGPKFKMPEMHFKAPKISMPDVDLNLKGPKLKGDVDVSLPEVEGEMKVPDVDIKGPKVDISAPDVDVHGPDWHLKMPKVKMPKFSMPGFKGEGPEVDVKLPKADVDVSGPKMDAEVPDVNIEGPDAKLKGPKFKMPEMSIKPQKISIPDVGLHLKGPKMKGDYDVTVPKVEGEIKAPDVDIKGPKVDINAPDVEVHGPDWHLKMPKVKMPKFSMPGFKGEGPEVDMNLPKADLGVSGPKVDIDVPDVNLEAPEGKLKGPKFKMPSMNIQTHKISMPDVGLNLKAPKLKTDVDVSLPKVEGDLKGPEIDVKAPKMDVNVGDIDIEGPEGKLKGPKFKMPEMHFKAPKISMPDVDLHLKGPKVKGDMDVSVPKVEGEMKVPDVDIKGPKVDIDAPDVEVHDPDWHLKMPKMKMPKFSMPGFKAEGPEVDVNLPKADIDVSGPSVDTDAPDLDIEGPEGKLKGSKFKMPKLNIKAPKVSMPDVDLNLKGPKLKGEIDASVPELEGDLRGPQVDVKGPFVEAEVPDVDLECPDAKLKGPKFKMPEMHFKAPKISMPDVDLHLKGPKVKGDADVSVPKLEGDLTGPSVGVEVPDVELECPDAKLKGPKFKMPDMHFKAPKISMPDVDLHLKGPKVKGDVDVSVPKLEGDLTGPSVGVEVPDVELECPDAKLKGPKFKMPEMHFKTPKISMPDVDLHLKGPKVKGDMDVSVPKVEGEMKVPDVDIKGPKMDIDAPDVDVHGPDWHLKMPKMKMPKFSMPGFKAEGPEVDVNLPKADVVVSGPKVDVEVPDVSLEGPEGKLKGPKLKMPEMHFKAPKISMPDVDLHLKGPKVKGDVDVSLPKLEGDLTGPSVDVEVPDVELECPDAKLKGPKFKMPEMHFKTPKISMPDVNLNLKGPKVKGDMDVSVPKVEGEMKVPDVDIRGPKVDIDAPDVDVHGPDWHLKMPKMKMPKFSMPGFKGEGPEVDVNLPKADVDVSGPKVDVEVPDVSLEGPEGKLKGPKFKMPEMHFKTPKISMPDVDFNLKGPKIKGDVDVSAPKLEGELKGPELDVKGPKLDADMPEVAVEGPNGKWKTPKFKMPDMHFKAPKISMPDLDLHLKSPKAKGEVDVDVPKLEGDLKGPHVDVSGPDIDIEGPEGKLKGPKFKMPDMHFKAPNISMPDVDLNLKGPKIKGDVDVSVPEVEGKLEVPDMNIRGPKVDVNAPDVQAPDWHLKMPKMKMPKFSMPGFKAEGPEVDVNLPKADVDISGPKVDIEGPDVNIEGPEGKLKGPKLKMPEMNIKAPKISMPDFDLHLKGPKVKGDVDVSLPKVEGDLKGPEVDIKGPKVDINAPDVGVQGPDWHLKMPKVKMPKFSMPGFKGEGPDGDVKLPKADIDVSGPKVDIEGPDVNIEGPEGKLKGPKFKMPEMNIKAPKISMPDIDLNLKGPKVKGDVDVSLPKVEGDLKGPEVDIKGPKVDIDAPDVDVHGPDWHLKMPKIKMPKISMPGFKGEGPDVDVNLPKADIDVSGPKVDVECPDVNIEGPEGKWKSPKFKMPEMHFKTPKISMPDIDLNLTGPKIKGDVDVTGPKVEGDLKGPEVDLKGPKVDIDVPDVNVQGPDWHLKMPKMKMPKFSMPGFKAEGPEVDVNLPKADVDVSGPKVDVEGPDVNIEGPEGKLKGPKFKMPEMNIKAPKIPMPDFDLHLKGPKVKGDVDISLPKVEGDLKGPEVDIRGPQVDIDVPDVGVQGPDWHLKMPKVKMPKFSMPGFKGEGPDVDVNLPKADLDVSGPKVDIDVPDVNIEGPEGKLKGPKFKMPEMNIKAPKISMPDIDLNLKGPKVKGDMDVSLPKVEGDMKVPDVDIKGPKVDINAPDVDVQGPDWHLKMPKIKMPKISMPGFKGEGPEVDVNLPKADLDVSGPKVDVDVPDVNIEGPDAKLKGPKFKMPEMNIKAPKISMPDLDLNLKGPKMKGEVDVSLANVEGDLKGPALDIKGPKIDVDAPDIDIHGPDAKLKGPKLKMPDMHVNMPKISMPEIDLNLKGSKLKGDVDVSGPKLEGDIKAPSLDIKGPEVDVSGPKLNIEGKSKKSRFKLPKFNFSGSKVQTPEVDVKGKKPDIDITGPKVDINAPDVEVQGKVKGSKFKMPFLSISSPKVSMPDVELNLKSPKVKGDLDIAGPNLEGDFKGPKVDIKAPEVNLNAPDVDVHGPDWNLKMPKMKMPKFSVSGLKAEGPDVAVDLPKGDINIEGPSMNIEGPDLNVEGPEGGLKGPKFKMPDMNIKAPKISMPDIDLNLKGPKVKGDVDISLPKLEGDLKGPEVDIKGPKVDINAPDVDVHGPDWHLKMPKVKMPKFSMPGFKGEGPEVDVTLPKADIDISGPNVDVDVPDVNIEGPDAKLKGPKFKMPEMNIKAPKISMPDFDLNLKGPKMKGDVVVSLPKVEGDLKGPEVDIKGPKVDIDTPDINIEGSEGKFKGPKFKIPEMHLKAPKISMPDIDLNLKGPKVKGDVDVSLPKMEGDLKGPEVDIKGPKVDINAPDVDVQGPDWHLKMPKVKMPKFSMPGFKGEGPDVDVNLPKADLDVSGPKVDIDVPDVNIEGPEGKLKGPKFKMPEMNIKAPKISMPDIDLNLKGPKVKGDMDVSLPKVEGDMQVPDLDIKGPKVDINAPDVDVRGPDWHLKMPKIKMPKISMPGFKGEGPEVDVNLPKADLDVSGPKVDVDVPDVNIEGPDAKLKGPKFKMPEMNIKAPKISMPDFDLHLKGPKVKGDVDVSLPKMEGDLKAPEVDIKGPKVDIDAPDVDVHGPDWHLKMPKVKMPKFSMPGFKGEGPEVDVNLPKADIDVSGPKVDIDTPDIDIHGPEGKLKGPKFKMPDLHLKAPKISMPEVDLNLKGPKMKGDVDVSLPKVEGDLKGPEVDIKGPKVDIDVPDVDVQGPDWHLKMPKVKMPKFSMPGFKGEGPDVDVNLPKADLDVSGPKVDIDVPDVNIEGPDAKLKGPKFKMPEMNIKAPKISMPDFDLHLKGPKVKGDVDVSLPKVEGDLKGPEVDIKGPKVDIDAPDVDVHGPDWHLKMPKVKMPKFSMPGFKGEGPDVDVTLPKADIEISGPKVDIDAPDVSIEGPDAKLKGPKFKMPEMNIKAPKISMPDIDFNLKGPKVKGDVDVSLPKVEGDLKGPEIDIKGPSLDIDTPDVNIEGPEGKLKGPKFKMPEMNIKAPKISMPDFDLHLKGPKVKGDVDVSLPKVESDLKGPEVDIEGPEGKLKGPKFKMPDVHFKSPQISMSDIDLNLKGPKIKGDMDISVPKLEGDLKGPKVDVKGPKVGIDTPDIDIHGPEGKLKGPKFKMPDLHLKAPKISMPEVDLNLKGPKVKGDMDISLPKVEGDLKGPEVDIRDPKVDIDVPDVDVQGPDWHLKMPKVKMPKFSMPGFKGEGPDVDVNLPKADIDVSGPKVDVDVPDVNIEGPDAKLKGPKFKMPEMSIKAPKISMPDIDLNLKGPKVKGDVDVTLPKVEGDLKGPEADIKGPKVDINTPDVDVHGPDWHLKMPKVKMPKFSMPGFKGEGPDVDVSLPKADIDVSGPKVDVDIPDVNIEGPDAKLKGPKFKMPEINIKAPKISIPDVDLDLKGPKVKGDFDVSVPKVEGTLKGPEVDLKGPRLDFEGPDAKLSGPSLKMPSLEISAPKVTAPDVDLHLKAPKIGFSGPKLEGGEVDLKGPKVEAPSLDVHMDSPDINIEGPDVKIPKFKKPKFGFGAKSPKADIKSPSLDVTVPEAELNLETPEISVGGKGKKSKFKMPKIHMSGPKIKAKKQGFDLNVPGGEIDASLKAPDVDVNIAGPDAALKVDVKSPKTKKTMFGKMYFPDVEFDIKSPKFKAEAPLPSPKLEGELQAPDLELSLPAIHVEGLDIKAKAPKVKMPDVDISVPKIEGDLKGPKVQANLGAPDINIEGLDAKVKTPSFGISAPQVSIPDVNVNLKGPKIKGDVPSVGLEGPDVDLQGPEAKIKFPKFSMPKIGIPGVKMEGGGAEVHAQLPSLEGDLRGPDVKLEGPDVSLKGPGVDLPSVNLSMPKVSGPDLDLNLKGPSLKGDLDASVPSMKVHAPGLNLSGVGGKMQVGGDGVKVPGIDATTKLNVGAPDVTLRGPSLQGDLAVSGDIKCPKVSVGAPDLSLEASEGSIKLPKMKLPQFGISTPGSDLHVNAKGPQVSGELKGPGVDVNLKGPRISAPNVDFNLEGPKVKGSLGATGEIKGPTVGGGLPGIGVQGLEGNLQMPGIKSSGCDVNLPGVNVKLPTGQISGPEIKGGLKGSEVGFHGAAPDISVKGPAFNMASPESDFGINLKGPKIKGGADVSGGVSAPDISLGEGHLSVKGSGGEWKGPQVSSALNLDTSKFAGGLHFSGPKVEGGVKGGQIGLQAPGLSVSGPQGHLESGSGKVTFPKMKIPKFTFSGRELVGREMGVDVHFPKAEASIQAGAGDGEWEESEVKLKKSKIKMPKFNFSKPKGKGGVTGSPEASISGSKGDLKSSKASLGSLEGEAEAEASSPKGKFSLFKSKKPRHRSNSFSDEREFSGPSTPTGTLEFEGGEVSLEGGKVKGKHGKLKFGTFGGLGSKSKGHYEVTGSDDETGKLQGSGVSLASKKSRLSSSSSNDSGNKVGIQLPEVELSVSTKKE.

Met1 carries the post-translational modification N-acetylmethionine. Residues 9 to 90 (ELLLPNWQGS…TVGLKLHRKG (82 aa)) enclose the PDZ domain. A phosphoserine mark is found at Ser41 and Ser93. Phosphothreonine is present on Thr101. Ser115 carries the phosphoserine modification. A Glycyl lysine isopeptide (Lys-Gly) (interchain with G-Cter in SUMO1); alternate cross-link involves residue Lys134. Lys134 participates in a covalent cross-link: Glycyl lysine isopeptide (Lys-Gly) (interchain with G-Cter in SUMO2); alternate. Ser135 bears the Phosphoserine mark. Thr158 carries the phosphothreonine modification. The residue at position 177 (Ser177) is a Phosphoserine. Lys181 participates in a covalent cross-link: Glycyl lysine isopeptide (Lys-Gly) (interchain with G-Cter in SUMO2). Residues Ser210, Ser212, and Ser216 each carry the phosphoserine modification. Thr218 bears the Phosphothreonine mark. Ser220 and Ser256 each carry phosphoserine. Arg270 is subject to Omega-N-methylarginine. The interval 314-347 (FGVSTGREGQTPKAGLRVSAPEVSVGHKGGKPGL) is disordered. Phosphoserine is present on residues Ser332, Ser337, Ser379, and Ser470. Thr490 bears the Phosphothreonine mark. The residue at position 511 (Ser511) is a Phosphoserine. The segment at 545–564 (TPNLEGTLTGPRLGSPSGKT) is disordered. A phosphothreonine mark is found at Thr551 and Thr553. Phosphoserine occurs at positions 559, 570, 572, and 658. Glycyl lysine isopeptide (Lys-Gly) (interchain with G-Cter in SUMO2) cross-links involve residues Lys712 and Lys763. A phosphoserine mark is found at Ser793 and Ser819. A Glycyl lysine isopeptide (Lys-Gly) (interchain with G-Cter in SUMO2) cross-link involves residue Lys891. A Glycyl lysine isopeptide (Lys-Gly) (interchain with G-Cter in SUMO1) cross-link involves residue Lys942. Residue Lys961 forms a Glycyl lysine isopeptide (Lys-Gly) (interchain with G-Cter in SUMO1); alternate linkage. Lys961 is covalently cross-linked (Glycyl lysine isopeptide (Lys-Gly) (interchain with G-Cter in SUMO2); alternate). The disordered stretch occupies residues 970-993 (KLEGDLKGPKVDVSAPDVEMQGPD). Phosphoserine occurs at positions 1010, 1042, 1068, and 1170. The residue at position 1192 (Thr1192) is a Phosphothreonine. Ser1196 is modified (phosphoserine). An N6-methyllysine modification is found at Lys1208. Ser1286 and Ser1298 each carry phosphoserine. The interval 1414 to 1438 (SGPKMDAEVPDVNIEGPDAKLKGPK) is disordered. Phosphoserine occurs at positions 1580 and 1654. Residue Lys1666 is modified to N6-methyllysine. A Glycyl lysine isopeptide (Lys-Gly) (interchain with G-Cter in SUMO2) cross-link involves residue Lys1726. Positions 1741–1766 (IDVSGPSVDTDAPDLDIEGPEGKLKG) are disordered. Position 1856 is a phosphoserine (Ser1856). Lys1868 bears the N6-methyllysine mark. Ser1923 carries the post-translational modification Phosphoserine. Lys1935 carries the N6-methyllysine modification. Residue Thr1986 is modified to Phosphothreonine. Position 1990 is a phosphoserine (Ser1990). Lys2002 is subject to N6-methyllysine. Lys2062 is covalently cross-linked (Glycyl lysine isopeptide (Lys-Gly) (interchain with G-Cter in SUMO2)). A phosphoserine mark is found at Ser2092 and Ser2118. N6-methyllysine is present on Lys2130. A Glycyl lysine isopeptide (Lys-Gly) (interchain with G-Cter in SUMO1) cross-link involves residue Lys2132. A Phosphoserine modification is found at Ser2138. Thr2181 bears the Phosphothreonine mark. At Ser2287 the chain carries Phosphoserine. Thr2309 bears the Phosphothreonine mark. Residue Ser2397 is modified to Phosphoserine. A compositionally biased stretch (basic and acidic residues) spans 2410-2419 (KLEGDLKGPH). Residues 2410–2439 (KLEGDLKGPHVDVSGPDIDIEGPEGKLKGP) form a disordered region. A Glycyl lysine isopeptide (Lys-Gly) (interchain with G-Cter in SUMO2) cross-link involves residue Lys2524. Positions 2542-2567 (SGPKVDIEGPDVNIEGPEGKLKGPKL) are disordered. Residue Lys2575 forms a Glycyl lysine isopeptide (Lys-Gly) (interchain with G-Cter in SUMO1) linkage. At Ser2580 the chain carries Phosphoserine. Residue Lys2594 forms a Glycyl lysine isopeptide (Lys-Gly) (interchain with G-Cter in SUMO1) linkage. At Ser2600 the chain carries Phosphoserine. Residues 2610–2619 (GPEVDIKGPK) are compositionally biased toward basic and acidic residues. 2 disordered regions span residues 2610–2633 (GPEVDIKGPKVDINAPDVGVQGPD) and 2667–2695 (IDVSGPKVDIEGPDVNIEGPEGKLKGPKF). Ser2670 is subject to Phosphoserine. Residue Lys2703 forms a Glycyl lysine isopeptide (Lys-Gly) (interchain with G-Cter in SUMO1) linkage. Ser2708 bears the Phosphoserine mark. Lys2722 participates in a covalent cross-link: Glycyl lysine isopeptide (Lys-Gly) (interchain with G-Cter in SUMO1). Ser2728 and Ser2798 each carry phosphoserine. Phosphothreonine is present on residues Thr2832 and Thr2845. The segment at 2853–2882 (VDVTGPKVEGDLKGPEVDLKGPKVDIDVPD) is disordered. Residues 2860–2878 (VEGDLKGPEVDLKGPKVDI) show a composition bias toward basic and acidic residues. Residue Lys2908 forms a Glycyl lysine isopeptide (Lys-Gly) (interchain with G-Cter in SUMO2) linkage. Positions 2921–2951 (ADVDVSGPKVDVEGPDVNIEGPEGKLKGPKF) are disordered. Lys2959 participates in a covalent cross-link: Glycyl lysine isopeptide (Lys-Gly) (interchain with G-Cter in SUMO1). Ser3054 is subject to Phosphoserine. Lys3087 is covalently cross-linked (Glycyl lysine isopeptide (Lys-Gly) (interchain with G-Cter in SUMO1)). A Phosphoserine modification is found at Ser3092. The span at 3122–3131 (VPDVDIKGPK) shows a compositional bias: basic and acidic residues. The interval 3122–3145 (VPDVDIKGPKVDINAPDVDVQGPD) is disordered. Residue Ser3182 is modified to Phosphoserine. Lys3215 participates in a covalent cross-link: Glycyl lysine isopeptide (Lys-Gly) (interchain with G-Cter in SUMO1). Phosphoserine occurs at positions 3220, 3362, 3409, 3412, 3426, and 3544. A Glycyl lysine isopeptide (Lys-Gly) (interchain with G-Cter in SUMO1) cross-link involves residue Lys3667. Residues 3702–3714 (GPEVDIKGPKVDI) show a composition bias toward basic and acidic residues. Residues 3702–3730 (GPEVDIKGPKVDIDTPDINIEGSEGKFKG) form a disordered region. Thr3716 carries the phosphothreonine modification. Position 3746 is a phosphoserine (Ser3746). Lys3760 participates in a covalent cross-link: Glycyl lysine isopeptide (Lys-Gly) (interchain with G-Cter in SUMO1). The disordered stretch occupies residues 3763–3799 (VDVSLPKMEGDLKGPEVDIKGPKVDINAPDVDVQGPD). At Ser3766 the chain carries Phosphoserine. The span at 3770–3785 (MEGDLKGPEVDIKGPK) shows a compositional bias: basic and acidic residues. Ser3836 is modified (phosphoserine). Lys3869 participates in a covalent cross-link: Glycyl lysine isopeptide (Lys-Gly) (interchain with G-Cter in SUMO1). 2 positions are modified to phosphoserine: Ser3874 and Ser3964. Residue Lys3997 forms a Glycyl lysine isopeptide (Lys-Gly) (interchain with G-Cter in SUMO1) linkage. A Phosphoserine modification is found at Ser4002. Lys4016 is covalently cross-linked (Glycyl lysine isopeptide (Lys-Gly) (interchain with G-Cter in SUMO1)). 2 positions are modified to phosphoserine: Ser4022 and Ser4092. 2 disordered regions span residues 4093–4117 (GPKVDIDTPDIDIHGPEGKLKGPKF) and 4147–4169 (VDVSLPKVEGDLKGPEVDIKGPK). Thr4100 is modified (phosphothreonine). A compositionally biased stretch (basic and acidic residues) spans 4103–4117 (IDIHGPEGKLKGPKF). The residue at position 4150 (Ser4150) is a Phosphoserine. Positions 4154-4169 (VEGDLKGPEVDIKGPK) are enriched in basic and acidic residues. Ser4220 carries the phosphoserine modification. Lys4253 is covalently cross-linked (Glycyl lysine isopeptide (Lys-Gly) (interchain with G-Cter in SUMO1)). Ser4258 is subject to Phosphoserine. A Glycyl lysine isopeptide (Lys-Gly) (interchain with G-Cter in SUMO1) cross-link involves residue Lys4272. Phosphoserine occurs at positions 4278 and 4360. Residues Lys4381 and Lys4400 each participate in a glycyl lysine isopeptide (Lys-Gly) (interchain with G-Cter in SUMO1) cross-link. Phosphoserine occurs at positions 4406 and 4425. Residues 4416-4447 (GPEIDIKGPSLDIDTPDVNIEGPEGKLKGPKF) form a disordered region. Residue Thr4430 is modified to Phosphothreonine. Lys4455 participates in a covalent cross-link: Glycyl lysine isopeptide (Lys-Gly) (interchain with G-Cter in SUMO1). The residue at position 4460 (Ser4460) is a Phosphoserine. Lys4474 is covalently cross-linked (Glycyl lysine isopeptide (Lys-Gly) (interchain with G-Cter in SUMO1)). Ser4480 and Ser4486 each carry phosphoserine. The tract at residues 4488 to 4508 (LKGPEVDIEGPEGKLKGPKFK) is disordered. A phosphoserine mark is found at Ser4516 and Ser4520. Disordered stretches follow at residues 4550 to 4581 (GPKVDVKGPKVGIDTPDIDIHGPEGKLKGPKF) and 4611 to 4631 (MDISLPKVEGDLKGPEVDIRD). Residue Thr4564 is modified to Phosphothreonine. 2 stretches are compositionally biased toward basic and acidic residues: residues 4567 to 4581 (IDIHGPEGKLKGPKF) and 4618 to 4631 (VEGDLKGPEVDIRD). Phosphoserine is present on residues Ser4684 and Ser4722. The segment covering 4746-4761 (VEGDLKGPEADIKGPK) has biased composition (basic and acidic residues). The segment at 4746–4768 (VEGDLKGPEADIKGPKVDINTPD) is disordered. Thr4766 is subject to Phosphothreonine. Ser4812 carries the phosphoserine modification. The tract at residues 4880-4904 (GPEVDLKGPRLDFEGPDAKLSGPSL) is disordered. A compositionally biased stretch (basic and acidic residues) spans 4881–4896 (PEVDLKGPRLDFEGPD). Residues Ser4900, Ser4903, Ser4908, Ser4953, and Ser4960 each carry the phosphoserine modification. The short motif at 4971–4979 (KIPKFKKPK) is the Nuclear localization signal element. Residues Ser4986 and Ser4993 each carry the phosphoserine modification. At Thr5009 the chain carries Phosphothreonine. Short sequence motifs (nuclear localization signal) lie at residues 5019–5027 (KKSKFKMPK) and 5034–5039 (KIKAKK). Phosphoserine occurs at positions 5077, 5099, 5110, 5125, 5261, 5318, 5332, 5369, 5386, 5393, and 5400. Residue Thr5415 is modified to Phosphothreonine. 6 positions are modified to phosphoserine: Ser5448, Ser5519, Ser5530, Ser5552, Ser5577, and Ser5620. A Glycyl lysine isopeptide (Lys-Gly) (interchain with G-Cter in SUMO2) cross-link involves residue Lys5623. Phosphoserine is present on Ser5641. Positions 5706-5716 (KLKKSKIKMPK) match the Nuclear localization signal motif. The interval 5716 to 5890 (KFNFSKPKGK…VELSVSTKKE (175 aa)) is disordered. Residues Ser5731, Ser5739, Ser5749, Ser5752, Ser5762, and Ser5763 each carry the phosphoserine modification. The Nuclear localization signal signature appears at 5772 to 5779 (KSKKPRHR). Phosphoserine occurs at positions 5780, 5782, 5790, and 5793. Residues Thr5794 and Thr5824 each carry the phosphothreonine modification. Ser5830 and Ser5841 each carry phosphoserine. Thr5845 carries the post-translational modification Phosphothreonine. Ser5851, Ser5857, and Ser5863 each carry phosphoserine. Over residues 5854 to 5870 (SLASKKSRLSSSSSNDS) the composition is skewed to low complexity.

Interacts with DYSF; the interaction is direct and Ca(2+)-independent.

The protein resides in the nucleus. Functionally, may be required for neuronal cell differentiation. This chain is Neuroblast differentiation-associated protein AHNAK (AHNAK), found in Homo sapiens (Human).